The chain runs to 195 residues: Large ribosomal subunit protein uL18 (195 aa).

It belongs to the universal ribosomal protein uL18 family. Part of the 50S ribosomal subunit. Contacts the 5S and 23S rRNAs.

This is one of the proteins that bind and probably mediate the attachment of the 5S RNA into the large ribosomal subunit, where it forms part of the central protuberance. The protein is Large ribosomal subunit protein uL18 of Metallosphaera sedula (strain ATCC 51363 / DSM 5348 / JCM 9185 / NBRC 15509 / TH2).